The chain runs to 392 residues: Nicotinate phosphoribosyltransferase (392 aa).

Phosphohistidine; by autocatalysis is present on His-214.

The protein belongs to the NAPRTase family. In terms of processing, transiently phosphorylated on a His residue during the reaction cycle. Phosphorylation strongly increases the affinity for substrates and increases the rate of nicotinate D-ribonucleotide production. Dephosphorylation regenerates the low-affinity form of the enzyme, leading to product release.

It carries out the reaction nicotinate + 5-phospho-alpha-D-ribose 1-diphosphate + ATP + H2O = nicotinate beta-D-ribonucleotide + ADP + phosphate + diphosphate. Its pathway is cofactor biosynthesis; NAD(+) biosynthesis; nicotinate D-ribonucleotide from nicotinate: step 1/1. In terms of biological role, catalyzes the synthesis of beta-nicotinate D-ribonucleotide from nicotinate and 5-phospho-D-ribose 1-phosphate at the expense of ATP. The chain is Nicotinate phosphoribosyltransferase from Xanthomonas euvesicatoria pv. vesicatoria (strain 85-10) (Xanthomonas campestris pv. vesicatoria).